An 880-amino-acid polypeptide reads, in one-letter code: Pentatricopeptide repeat-containing protein At3g07290, mitochondrial (880 aa).

A mitochondrion-targeting transit peptide spans 1-89 (MLLIHIRSTR…RSDNDICVRF (89 aa)). 19 PPR repeats span residues 159-193 (NYPC…GFVV), 194-228 (GMID…GFVL), 229-259 (DSHI…MSKE), 265-299 (NSVS…GCQP), 300-334 (STRT…GCKP), 335-369 (NVHT…RIFP), 370-404 (SVIT…ACKP), 405-439 (NVRT…GLSP), 440-474 (DIVS…DIEP), 475-509 (DCLT…GISL), 510-544 (DEVT…RILT), 545-579 (TPHS…GLVP), 580-614 (SVVT…GCLP), 615-649 (NVYP…GVSP), 650-684 (NHVT…GYEL), 685-721 (NDRI…ETDP), 738-768 (ISGL…VLER), 772-806 (LEKA…GFVP), and 807-842 (SFKS…GVVE).

Belongs to the PPR family. P subfamily.

Its subcellular location is the mitochondrion. This chain is Pentatricopeptide repeat-containing protein At3g07290, mitochondrial, found in Arabidopsis thaliana (Mouse-ear cress).